The sequence spans 1235 residues: Major DNA-binding protein (1235 aa).

The disordered stretch occupies residues 536–584; the sequence is GGLDGKGDDGVPGGGAGGGGGRDVSGGPSDGLGGGRGGGGGGDSGGMMG. The span at 545–584 shows a compositional bias: gly residues; sequence GVPGGGAGGGGGRDVSGGPSDGLGGGRGGGGGGDSGGMMG. A Required for filament formation motif is present at residues 846–847; the sequence is FW. Residues 1214 to 1226 show a composition bias toward gly residues; that stretch reads GVGGSSGGGGGSG. Residues 1214-1235 form a disordered region; it reads GVGGSSGGGGGSGLLPAKRSRL. The interval 1232–1235 is required for nuclear localization; that stretch reads RSRL.

Belongs to the herpesviridae major DNA-binding protein family. In terms of assembly, homooligomers. Forms double-helical filaments necessary for the formation of replication compartments within the host nucleus. Interacts with the origin-binding protein. Interacts with the helicase primase complex; this interaction stimulates primer synthesis activity of the helicase-primase complex. Interacts with the DNA polymerase. Interacts with the alkaline exonuclease; this interaction increases its nuclease processivity.

It is found in the host nucleus. Plays several crucial roles in viral infection. Participates in the opening of the viral DNA origin to initiate replication by interacting with the origin-binding protein. May disrupt loops, hairpins and other secondary structures present on ssDNA to reduce and eliminate pausing of viral DNA polymerase at specific sites during elongation. Promotes viral DNA recombination by performing strand-transfer, characterized by the ability to transfer a DNA strand from a linear duplex to a complementary single-stranded DNA circle. Can also catalyze the renaturation of complementary single strands. Additionally, reorganizes the host cell nucleus, leading to the formation of prereplicative sites and replication compartments. This process is driven by the protein which can form double-helical filaments in the absence of DNA. The protein is Major DNA-binding protein of Homo sapiens (Human).